A 738-amino-acid polypeptide reads, in one-letter code: NAD(P)H-quinone oxidoreductase subunit 5, chloroplastic (738 aa).

Helical transmembrane passes span 9-29 (WVIP…LFLI), 39-59 (IWAF…LHLS), 89-109 (VDPL…LVLI), 125-145 (FVYI…SNLI), 147-167 (IYFF…FWFT), 185-205 (GDFG…SLEF), 219-239 (NGIN…GAVA), 258-278 (TPIS…FLLA), 280-300 (LLPL…VGTI), 327-347 (LGYM…FHLI), 354-374 (ALLF…VGYS), 396-416 (TTFL…CFWS), 425-445 (WLYS…TAFY), 542-562 (LFPL…GIPF), 610-630 (SLAI…YSFF), 691-711 (GVID…GEEI), and 717-737 (GRIS…LFFI).

Belongs to the complex I subunit 5 family. In terms of assembly, NDH is composed of at least 16 different subunits, 5 of which are encoded in the nucleus.

It is found in the plastid. It localises to the chloroplast thylakoid membrane. The enzyme catalyses a plastoquinone + NADH + (n+1) H(+)(in) = a plastoquinol + NAD(+) + n H(+)(out). It catalyses the reaction a plastoquinone + NADPH + (n+1) H(+)(in) = a plastoquinol + NADP(+) + n H(+)(out). Functionally, NDH shuttles electrons from NAD(P)H:plastoquinone, via FMN and iron-sulfur (Fe-S) centers, to quinones in the photosynthetic chain and possibly in a chloroplast respiratory chain. The immediate electron acceptor for the enzyme in this species is believed to be plastoquinone. Couples the redox reaction to proton translocation, and thus conserves the redox energy in a proton gradient. The sequence is that of NAD(P)H-quinone oxidoreductase subunit 5, chloroplastic (ndhF) from Saccharum officinarum (Sugarcane).